The following is a 237-amino-acid chain: MHTDWETSESAEDYSRNTAAAQWEPMGYPAVFRSLALATTDSDNAPPILDYGCGPGFVDRHVAEKYGRRVIAVDISSSMIDLARSQHSHPLVTYRHVPDSQLDFLGDKEIGGCMSCFVLMQMADSDTQVEICRRIRRTLAPGAMLAVLNTHPDSVGIQFATLRNGEPDRVYQPGDPMTTVLTTDKGVLRLQDYYWRVTDYVHALEAAGFHEVTVEHLPPPPADPTPHPQFLLVRGTA.

Belongs to the methyltransferase superfamily.

The enzyme catalyses N-demethylindolmycin + S-adenosyl-L-methionine = indolmycin + S-adenosyl-L-homocysteine + H(+). Involved in the biosynthesis of the antibiotic indolmycin, an inhibitor of the bacterial tryptophan-tRNA synthetases. Catalyzes the methylation of N-demethylindolmycin to yield indolmycin, with S-adenosylmethionine (AdoMet) acting as the methyl donor. The chain is N-demethylindolmycin N-methyltransferase from Streptomyces griseus.